A 443-amino-acid polypeptide reads, in one-letter code: Probable glycine dehydrogenase (decarboxylating) subunit 1 (443 aa).

Belongs to the GcvP family. N-terminal subunit subfamily. The glycine cleavage system is composed of four proteins: P, T, L and H. In this organism, the P 'protein' is a heterodimer of two subunits.

The catalysed reaction is N(6)-[(R)-lipoyl]-L-lysyl-[glycine-cleavage complex H protein] + glycine + H(+) = N(6)-[(R)-S(8)-aminomethyldihydrolipoyl]-L-lysyl-[glycine-cleavage complex H protein] + CO2. In terms of biological role, the glycine cleavage system catalyzes the degradation of glycine. The P protein binds the alpha-amino group of glycine through its pyridoxal phosphate cofactor; CO(2) is released and the remaining methylamine moiety is then transferred to the lipoamide cofactor of the H protein. The polypeptide is Probable glycine dehydrogenase (decarboxylating) subunit 1 (Nitratidesulfovibrio vulgaris (strain DSM 19637 / Miyazaki F) (Desulfovibrio vulgaris)).